A 691-amino-acid chain; its full sequence is Threonine--tRNA ligase (691 aa).

Residues 1 to 22 (MSVPAQPAPGADGGDPRQPIRV) form a disordered region. Positions 1–73 (MSVPAQPAPG…DADAEVTPIA (73 aa)) constitute a TGS domain. A catalytic region spans residues 268–574 (DHRKLGVELD…LTEHYAGAFP (307 aa)). The Zn(2+) site is built by C373, H424, and H551.

This sequence belongs to the class-II aminoacyl-tRNA synthetase family. Homodimer. The cofactor is Zn(2+).

It localises to the cytoplasm. The enzyme catalyses tRNA(Thr) + L-threonine + ATP = L-threonyl-tRNA(Thr) + AMP + diphosphate + H(+). Catalyzes the attachment of threonine to tRNA(Thr) in a two-step reaction: L-threonine is first activated by ATP to form Thr-AMP and then transferred to the acceptor end of tRNA(Thr). Also edits incorrectly charged L-seryl-tRNA(Thr). This is Threonine--tRNA ligase from Mycobacterium ulcerans (strain Agy99).